The primary structure comprises 433 residues: Glutamate-1-semialdehyde 2,1-aminomutase (433 aa).

N6-(pyridoxal phosphate)lysine is present on K271.

This sequence belongs to the class-III pyridoxal-phosphate-dependent aminotransferase family. HemL subfamily. In terms of assembly, homodimer. Requires pyridoxal 5'-phosphate as cofactor.

Its subcellular location is the cytoplasm. It catalyses the reaction (S)-4-amino-5-oxopentanoate = 5-aminolevulinate. It participates in porphyrin-containing compound metabolism; protoporphyrin-IX biosynthesis; 5-aminolevulinate from L-glutamyl-tRNA(Glu): step 2/2. It functions in the pathway porphyrin-containing compound metabolism; chlorophyll biosynthesis. The chain is Glutamate-1-semialdehyde 2,1-aminomutase from Prochlorococcus marinus subsp. pastoris (strain CCMP1986 / NIES-2087 / MED4).